Reading from the N-terminus, the 183-residue chain is ATP synthase subunit b 2 (183 aa).

The chain crosses the membrane as a helical span at residues 27 to 47; that stretch reads PSFYAFLALLIFFGLLLHMGV.

It belongs to the ATPase B chain family. In terms of assembly, F-type ATPases have 2 components, F(1) - the catalytic core - and F(0) - the membrane proton channel. F(1) has five subunits: alpha(3), beta(3), gamma(1), delta(1), epsilon(1). F(0) has three main subunits: a(1), b(2) and c(10-14). The alpha and beta chains form an alternating ring which encloses part of the gamma chain. F(1) is attached to F(0) by a central stalk formed by the gamma and epsilon chains, while a peripheral stalk is formed by the delta and b chains.

It localises to the cell inner membrane. In terms of biological role, f(1)F(0) ATP synthase produces ATP from ADP in the presence of a proton or sodium gradient. F-type ATPases consist of two structural domains, F(1) containing the extramembraneous catalytic core and F(0) containing the membrane proton channel, linked together by a central stalk and a peripheral stalk. During catalysis, ATP synthesis in the catalytic domain of F(1) is coupled via a rotary mechanism of the central stalk subunits to proton translocation. Component of the F(0) channel, it forms part of the peripheral stalk, linking F(1) to F(0). This Maricaulis maris (strain MCS10) (Caulobacter maris) protein is ATP synthase subunit b 2.